We begin with the raw amino-acid sequence, 293 residues long: MPELPEVETVRRGLQPFMEGATVVRVEQNRPDLRFAFPENFAERLSGRRIEALGRRAKYLTVHLDDGLSIISHLGMSGSFRIEAEDAQGLPGGFHHERSKNSLHDHVVFHLMRPDGASARIIYNDPRRFGFMLFAEKGALEEHPLLKDLGVEPTGNLLSGEVLAALFKGRRKPLKAALLDQRLIAGLGNIYVCEALWRAGLSPMRAAGSVAGEMDVMERLAGAIRSVIAQAIAAGGSSLKDYIQADGALGYFQHSFSVYGREGKPCRNPACGGTVERVVQSGRSTFFCASCQT.

Pro2 serves as the catalytic Schiff-base intermediate with DNA. The active-site Proton donor is Glu3. The Proton donor; for beta-elimination activity role is filled by Lys58. DNA contacts are provided by His104, Arg127, and Arg170. Residues 257-293 form an FPG-type zinc finger; it reads SVYGREGKPCRNPACGGTVERVVQSGRSTFFCASCQT. Arg283 acts as the Proton donor; for delta-elimination activity in catalysis.

It belongs to the FPG family. Monomer. Zn(2+) serves as cofactor.

The enzyme catalyses Hydrolysis of DNA containing ring-opened 7-methylguanine residues, releasing 2,6-diamino-4-hydroxy-5-(N-methyl)formamidopyrimidine.. The catalysed reaction is 2'-deoxyribonucleotide-(2'-deoxyribose 5'-phosphate)-2'-deoxyribonucleotide-DNA = a 3'-end 2'-deoxyribonucleotide-(2,3-dehydro-2,3-deoxyribose 5'-phosphate)-DNA + a 5'-end 5'-phospho-2'-deoxyribonucleoside-DNA + H(+). Its function is as follows. Involved in base excision repair of DNA damaged by oxidation or by mutagenic agents. Acts as a DNA glycosylase that recognizes and removes damaged bases. Has a preference for oxidized purines, such as 7,8-dihydro-8-oxoguanine (8-oxoG). Has AP (apurinic/apyrimidinic) lyase activity and introduces nicks in the DNA strand. Cleaves the DNA backbone by beta-delta elimination to generate a single-strand break at the site of the removed base with both 3'- and 5'-phosphates. In Brucella canis (strain ATCC 23365 / NCTC 10854 / RM-666), this protein is Formamidopyrimidine-DNA glycosylase.